The chain runs to 431 residues: Trigger factor (431 aa).

Positions 158–243 constitute a PPIase FKBP-type domain; sequence GDLVAVETWS…VAEVSEPVVP (86 aa).

It belongs to the FKBP-type PPIase family. Tig subfamily.

It is found in the cytoplasm. It catalyses the reaction [protein]-peptidylproline (omega=180) = [protein]-peptidylproline (omega=0). Functionally, involved in protein export. Acts as a chaperone by maintaining the newly synthesized protein in an open conformation. Functions as a peptidyl-prolyl cis-trans isomerase. This Stenotrophomonas maltophilia (strain R551-3) protein is Trigger factor.